Reading from the N-terminus, the 808-residue chain is Tegument protein UL47 homolog (808 aa).

2 disordered regions span residues 1-21 and 77-266; these read MQMP…RENQ and PNEE…SFGE. The span at 83–92 shows a compositional bias: basic and acidic residues; that stretch reads DNSRGRDRTR. Basic residues predominate over residues 133-160; that stretch reads SRARSRRRSSSRRRHRNASMHMHFRGGS. Residues 162–171 show a composition bias toward polar residues; that stretch reads RSATGSQNLI. The segment covering 197–214 has biased composition (basic residues); sequence RSSRVRRRHRRSSRRRGP. The span at 235 to 259 shows a compositional bias: basic and acidic residues; sequence PISDIDQKRLRKNSDTSSRGTRESP.

This sequence belongs to the alphaherpesvirinae HHV-1 UL47 family. Interacts with US3 kinase. Interacts with UL31 and UL34; these interactions seem important for efficient virion nuclear egress. Interacts with UL41/VHS. Phosphorylated by US3. This phosphorylation is required for proper nuclear localization. In terms of processing, O-glycosylated.

It is found in the virion tegument. The protein localises to the host nucleus. The protein resides in the host cytoplasm. In terms of biological role, tegument protein that can bind to various RNA transcripts. Plays a role in the attenuation of selective viral and cellular mRNA degradation by modulating the activity of host shutoff RNase UL41/VHS. Also plays a role in the primary envelopment of virions in the perinuclear space, probably by interacting with two nuclear egress proteins UL31 and UL34. Plays an important role in the splicing of glycoprotein/gC transcripts and thereby participates in bird-to-bird viral transmission. In Gallus gallus (Chicken), this protein is Tegument protein UL47 homolog (MDV060).